Reading from the N-terminus, the 174-residue chain is MTARIVSTFGVAGLLRLKSFSGEYAHLATLKQVCLAPPRSRSSGTLACALPREAVHMVEHVLLRAQDALLKLHRVDTVECARTFVGAELRVPRAEACPLSAGEFYLADLCRCELVFEGSAVGVVLSVVEGGGSSLLEVQRTHGGVCYVPFHRTFIGDVDVGRKKIELLQRWILE.

Residues 101 to 174 enclose the PRC barrel domain; sequence AGEFYLADLC…IELLQRWILE (74 aa).

Belongs to the RimM family. In terms of assembly, binds ribosomal protein uS19.

Its subcellular location is the cytoplasm. In terms of biological role, an accessory protein needed during the final step in the assembly of 30S ribosomal subunit, possibly for assembly of the head region. Essential for efficient processing of 16S rRNA. May be needed both before and after RbfA during the maturation of 16S rRNA. It has affinity for free ribosomal 30S subunits but not for 70S ribosomes. The chain is Ribosome maturation factor RimM from Treponema pallidum (strain Nichols).